We begin with the raw amino-acid sequence, 366 residues long: uncharacterized protein (366 aa).

This is an uncharacterized protein from Methanocaldococcus jannaschii (strain ATCC 43067 / DSM 2661 / JAL-1 / JCM 10045 / NBRC 100440) (Methanococcus jannaschii).